A 94-amino-acid polypeptide reads, in one-letter code: PTS system galactitol-specific EIIB component (94 aa).

One can recognise a PTS EIIB type-2 domain in the interval 1 to 94; it reads MKRKIIVACG…QNKILTILQG (94 aa). Residue Cys-9 is the Phosphocysteine intermediate; for EIIB activity of the active site. Cys-9 carries the phosphocysteine; by EIIA modification.

Forms a complex with one each of subunit of GatA, GatB and 2 subunits of GatC.

The protein resides in the cytoplasm. The catalysed reaction is galactitol(out) + N(pros)-phospho-L-histidyl-[protein] = galactitol 1-phosphate(in) + L-histidyl-[protein]. The phosphoenolpyruvate-dependent sugar phosphotransferase system (PTS), a major carbohydrate active transport system, catalyzes the phosphorylation of incoming sugar substrates concomitant with their translocation across the cell membrane. The enzyme II complex composed of GatA, GatB and GatC is involved in galactitol transport. The sequence is that of PTS system galactitol-specific EIIB component (gatB) from Escherichia coli O157:H7.